Consider the following 197-residue polypeptide: MVNYPHHFIRKQSKPSQISKTINFANRGMSFEAAINATNNYYLSQKIAVIHKKPTPIQIVRVDYPRRSRAKIVEAYFRQASTTDYSGVYKGYYIDFEAKETRHKTSIPMKNFHAHQIKHMSQVLDQKGICFVLLHFSTLRETYLLPASHLIHFYRIDNGGKSMPLDYIKKNGYQVNVSAFPQVPYLDIIDKNILGGD.

Residues Thr-82, Asp-84, Glu-97, and Gln-116 each coordinate Mg(2+).

The protein belongs to the RecU family. Requires Mg(2+) as cofactor.

The protein resides in the cytoplasm. It catalyses the reaction Endonucleolytic cleavage at a junction such as a reciprocal single-stranded crossover between two homologous DNA duplexes (Holliday junction).. In terms of biological role, endonuclease that resolves Holliday junction intermediates in genetic recombination. Cleaves mobile four-strand junctions by introducing symmetrical nicks in paired strands. Promotes annealing of linear ssDNA with homologous dsDNA. Required for DNA repair, homologous recombination and chromosome segregation. The sequence is that of Holliday junction resolvase RecU from Streptococcus mutans serotype c (strain ATCC 700610 / UA159).